We begin with the raw amino-acid sequence, 195 residues long: 2-cysteine peroxiredoxin, chloroplastic (195 aa).

In terms of domain architecture, Thioredoxin spans 3-161; it reads IRVGQKAPDF…ALRTLQAIQY (159 aa). The Cysteine sulfenic acid (-SOH) intermediate role is filled by C49.

Belongs to the peroxiredoxin family. AhpC/Prx1 subfamily. In terms of assembly, homodimer; disulfide-linked, upon oxidation.

Its subcellular location is the plastid. It localises to the chloroplast. The catalysed reaction is a hydroperoxide + [thioredoxin]-dithiol = an alcohol + [thioredoxin]-disulfide + H2O. Thiol-specific peroxidase that catalyzes the reduction of hydrogen peroxide and organic hydroperoxides to water and alcohols, respectively. Plays a role in cell protection against oxidative stress by detoxifying peroxides. This chain is 2-cysteine peroxiredoxin, chloroplastic, found in Chattonella marina var. antiqua (Red tide flagellate).